The primary structure comprises 135 residues: Holo-[acyl-carrier-protein] synthase (135 aa).

Mg(2+)-binding residues include Asp-8 and Glu-58.

The protein belongs to the P-Pant transferase superfamily. AcpS family. It depends on Mg(2+) as a cofactor.

It localises to the cytoplasm. It catalyses the reaction apo-[ACP] + CoA = holo-[ACP] + adenosine 3',5'-bisphosphate + H(+). Functionally, transfers the 4'-phosphopantetheine moiety from coenzyme A to a Ser of acyl-carrier-protein. The polypeptide is Holo-[acyl-carrier-protein] synthase (Leuconostoc citreum (strain KM20)).